A 1893-amino-acid polypeptide reads, in one-letter code: CDK5 regulatory subunit-associated protein 2 (1893 aa).

Residues 51-94 form a CM1 motif; interacts with the gTuRC region; it reads TVSPTRARNMKDFENQITELKKENFNLKLRIYFLEERMQQEFHG. The interval 58 to 196 is interaction with NCKAP5L; it reads RNMKDFENQI…TEKALRLRLE (139 aa). S547 is subject to Phosphoserine. The segment at 926 to 1208 is interaction with MAPRE1; the sequence is PGITNREAKK…LENLKQQLEE (283 aa). T1001 is subject to Phosphothreonine. Disordered regions lie at residues 1015 to 1071 and 1084 to 1105; these read AAYQ…NPED and SKSQ…SINT. Basic and acidic residues predominate over residues 1034 to 1048; the sequence is WRDKEMDSDQQRSYE. S1238 carries the post-translational modification Phosphoserine. Residues 1347–1381 are disordered; sequence LPESPEPSASHALSDYETSEKSFFSRDQKQDNETE. A compositionally biased stretch (basic and acidic residues) spans 1364–1381; that stretch reads TSEKSFFSRDQKQDNETE. A Phosphoserine modification is found at S1490. Basic and acidic residues-rich tracts occupy residues 1500–1519 and 1651–1661; these read SVKE…ERHN and PDKHDGDKYPM. Disordered regions lie at residues 1500–1521, 1646–1706, and 1754–1774; these read SVKE…HNQQ, EVPL…ATST, and QTQE…PHPA. A phosphoserine mark is found at S1663 and S1666. Composition is skewed to polar residues over residues 1663–1706 and 1754–1766; these read SDNS…ATST and QTQE…SQEL. The tract at residues 1726–1768 is interaction with CDK5R1; that stretch reads HVLGLIEDYEALLKQISQGQRLLAEMDIQTQEAPSSTSQELGT. An interaction with PCNT and AKAP9 region spans residues 1726–1893; sequence HVLGLIEDYE…GTCSPSRPGS (168 aa). The interval 1861 to 1870 is required for centrosomal attachment, Golgi localization and CALM1 interaction; sequence VVTHKILRKA. At S1893 the chain carries Phosphoserine.

As to quaternary structure, homodimer. Interacts with CDK5R1 (p35 form). CDK5RAP1, CDK5RAP2 and CDK5RAP3 show competitive binding to CDK5R1. May form a complex with CDK5R1 and CDK5. Interacts with pericentrin/PCNT; the interaction is leading to centrosomal and Golgi localization of CDK5RAP2 and PCNT. Interacts with AKAP9; the interaction targets CDK5RAP2 and AKAP9 to Golgi apparatus. Interacts with MAPRE1; the interaction is direct and targets CDK5RAP2 and EB1/MAPRE1 to microtubule plus ends. Interacts with TUBG1; the interaction is leading to the centrosomal localization of CDK5RAP2 and TUBG1. Interacts with TUBGCP3. Interacts with CALM1. Interacts with CDC20. Interacts with CEP68; degradation of CEP68 in early mitosis leads to removal of CDK5RAP2 from the centrosome which promotes centriole disengagement and subsequent centriole separation. Interacts with NCKAP5L. Forms a pericentrosomal complex with AKAP9, MAPRE1 and PDE4DIP isoform 13/MMG8/SMYLE; within this complex, MAPRE1 binding to CDK5RAP2 may be mediated by PDE4DIP. Interacts with LGALS3BP; this interaction may connect the pericentrosomal complex to the gamma-tubulin ring complex (gTuRC) to promote microtubule assembly and acetylation. Interacts with CCDC66. Associates (via CM1 motif) with TUBGCP2 of the gTuRC; the interaction plays a role in gTuRC activation. Post-translationally, phosphorylated in vitro by CDK5. Widely expressed. Expressed in heart, brain, placenta, lung, liver, skeletal muscle, kidney and pancreas.

Its subcellular location is the cytoplasm. It localises to the cytoskeleton. It is found in the microtubule organizing center. The protein resides in the centrosome. The protein localises to the golgi apparatus. Potential regulator of CDK5 activity via its interaction with CDK5R1. Negative regulator of centriole disengagement (licensing) which maintains centriole engagement and cohesion. Involved in regulation of mitotic spindle orientation. Plays a role in the spindle checkpoint activation by acting as a transcriptional regulator of both BUBR1 and MAD2 promoter. Together with EB1/MAPRE1, may promote microtubule polymerization, bundle formation, growth and dynamics at the plus ends. Regulates centrosomal maturation by recruitment of the gamma-tubulin ring complex (gTuRC) onto centrosomes. In complex with PDE4DIP isoform 13/MMG8/SMYLE, MAPRE1 and AKAP9, contributes to microtubules nucleation and extension from the centrosome to the cell periphery. Required for the recruitment of AKAP9 to centrosomes. Plays a role in neurogenesis. The protein is CDK5 regulatory subunit-associated protein 2 (CDK5RAP2) of Homo sapiens (Human).